Consider the following 66-residue polypeptide: Surface composition regulator (66 aa).

It belongs to the GlgS family.

Its function is as follows. Major determinant of cell surface composition. Negatively regulates motility, adhesion and synthesis of biofilm exopolysaccharides. The sequence is that of Surface composition regulator from Shigella dysenteriae serotype 1 (strain Sd197).